The chain runs to 449 residues: Phosphoglucosamine mutase (449 aa).

The active-site Phosphoserine intermediate is the serine 100. Residues serine 100, aspartate 241, aspartate 243, and aspartate 245 each contribute to the Mg(2+) site. The residue at position 100 (serine 100) is a Phosphoserine.

This sequence belongs to the phosphohexose mutase family. Mg(2+) is required as a cofactor. Activated by phosphorylation.

It catalyses the reaction alpha-D-glucosamine 1-phosphate = D-glucosamine 6-phosphate. In terms of biological role, catalyzes the conversion of glucosamine-6-phosphate to glucosamine-1-phosphate. The chain is Phosphoglucosamine mutase from Clostridium botulinum (strain 657 / Type Ba4).